The following is a 277-amino-acid chain: Proteasome subunit beta type-7 (277 aa).

The propeptide at 1-43 (MAAVSVFQAPVGGFSFDNCRRNAVLEADFAKKGFKLPKARKTG) is removed in mature form. Threonine 44 functions as the Nucleophile in the catalytic mechanism.

Belongs to the peptidase T1B family. As to quaternary structure, the 26S proteasome consists of a 20S proteasome core and two 19S regulatory subunits. The 20S proteasome core is a barrel-shaped complex made of 28 subunits that are arranged in four stacked rings. The two outer rings are each formed by seven alpha subunits, and the two inner rings are formed by seven beta subunits. The proteolytic activity is exerted by three beta-subunits PSMB5, PSMB6 and PSMB7.

It is found in the cytoplasm. The protein resides in the nucleus. The catalysed reaction is Cleavage of peptide bonds with very broad specificity.. Its function is as follows. Component of the 20S core proteasome complex involved in the proteolytic degradation of most intracellular proteins. This complex plays numerous essential roles within the cell by associating with different regulatory particles. Associated with two 19S regulatory particles, forms the 26S proteasome and thus participates in the ATP-dependent degradation of ubiquitinated proteins. The 26S proteasome plays a key role in the maintenance of protein homeostasis by removing misfolded or damaged proteins that could impair cellular functions, and by removing proteins whose functions are no longer required. Associated with the PA200 or PA28, the 20S proteasome mediates ubiquitin-independent protein degradation. This type of proteolysis is required in several pathways including spermatogenesis (20S-PA200 complex) or generation of a subset of MHC class I-presented antigenic peptides (20S-PA28 complex). Within the 20S core complex, PSMB7 displays a trypsin-like activity. The sequence is that of Proteasome subunit beta type-7 (Psmb7) from Rattus norvegicus (Rat).